A 425-amino-acid chain; its full sequence is Polyribonucleotide 5'-hydroxyl-kinase Clp1 (425 aa).

Residues Glu-22, Lys-62, and 124-129 each bind ATP; that span reads DVGKST.

It belongs to the Clp1 family. Clp1 subfamily. As to quaternary structure, component of the tRNA splicing endonuclease complex, composed of CLP1, TSEN2, TSEN15, TSEN34 and TSEN54. Component of pre-mRNA cleavage complex II (CF-II). Also associates with numerous components of the pre-mRNA cleavage complex I (CF-I/CFIm), including NUDT21, CPSF2, CPSF3, CPSF6 and CPSF7. Interacts with CSTF2 and SYMPK. Requires Mg(2+) as cofactor. Mn(2+) is required as a cofactor. It depends on Ni(2+) as a cofactor.

Its subcellular location is the nucleus. It carries out the reaction a 5'-end dephospho-2'-deoxyribonucleoside-DNA + ATP = a 5'-end 5'-phospho-2'-deoxyribonucleoside-DNA + ADP + H(+). It catalyses the reaction a 5'-end dephospho-ribonucleoside-RNA + ATP = a 5'-end 5'-phospho-ribonucleoside-RNA + ADP + H(+). Polynucleotide kinase that can phosphorylate the 5'-hydroxyl groups of double-stranded RNA (dsRNA), single-stranded RNA (ssRNA), double-stranded DNA (dsDNA) and double-stranded DNA:RNA hybrids. dsRNA is phosphorylated more efficiently than dsDNA, and the RNA component of a DNA:RNA hybrid is phosphorylated more efficiently than the DNA component. Plays a key role in both tRNA splicing and mRNA 3'-end formation. Component of the tRNA splicing endonuclease complex: phosphorylates the 5'-terminus of the tRNA 3'-exon during tRNA splicing; this phosphorylation event is a prerequisite for the subsequent ligation of the two exon halves and the production of a mature tRNA. Its role in tRNA splicing and maturation is required for cerebellar development. Component of the pre-mRNA cleavage complex II (CF-II), which seems to be required for mRNA 3'-end formation. Also phosphorylates the 5'-terminus of exogenously introduced short interfering RNAs (siRNAs), which is a necessary prerequisite for their incorporation into the RNA-induced silencing complex (RISC). However, endogenous siRNAs and microRNAs (miRNAs) that are produced by the cleavage of dsRNA precursors by DICER1 already contain a 5'-phosphate group, so this protein may be dispensible for normal RNA-mediated gene silencing. The sequence is that of Polyribonucleotide 5'-hydroxyl-kinase Clp1 from Homo sapiens (Human).